A 207-amino-acid chain; its full sequence is Thiamine-phosphate synthase (207 aa).

4-amino-2-methyl-5-(diphosphooxymethyl)pyrimidine contacts are provided by residues 36-40 (QLRIK) and Asp-68. Mg(2+) is bound by residues Asp-69 and Asp-88. Ser-106 lines the 4-amino-2-methyl-5-(diphosphooxymethyl)pyrimidine pocket. Residue 132–134 (TKT) coordinates 2-[(2R,5Z)-2-carboxy-4-methylthiazol-5(2H)-ylidene]ethyl phosphate. Lys-135 contacts 4-amino-2-methyl-5-(diphosphooxymethyl)pyrimidine. Residues Gly-162 and 182–183 (VS) contribute to the 2-[(2R,5Z)-2-carboxy-4-methylthiazol-5(2H)-ylidene]ethyl phosphate site.

This sequence belongs to the thiamine-phosphate synthase family. Requires Mg(2+) as cofactor.

It carries out the reaction 2-[(2R,5Z)-2-carboxy-4-methylthiazol-5(2H)-ylidene]ethyl phosphate + 4-amino-2-methyl-5-(diphosphooxymethyl)pyrimidine + 2 H(+) = thiamine phosphate + CO2 + diphosphate. It catalyses the reaction 2-(2-carboxy-4-methylthiazol-5-yl)ethyl phosphate + 4-amino-2-methyl-5-(diphosphooxymethyl)pyrimidine + 2 H(+) = thiamine phosphate + CO2 + diphosphate. The catalysed reaction is 4-methyl-5-(2-phosphooxyethyl)-thiazole + 4-amino-2-methyl-5-(diphosphooxymethyl)pyrimidine + H(+) = thiamine phosphate + diphosphate. The protein operates within cofactor biosynthesis; thiamine diphosphate biosynthesis; thiamine phosphate from 4-amino-2-methyl-5-diphosphomethylpyrimidine and 4-methyl-5-(2-phosphoethyl)-thiazole: step 1/1. In terms of biological role, condenses 4-methyl-5-(beta-hydroxyethyl)thiazole monophosphate (THZ-P) and 2-methyl-4-amino-5-hydroxymethyl pyrimidine pyrophosphate (HMP-PP) to form thiamine monophosphate (TMP). In Pyrococcus abyssi (strain GE5 / Orsay), this protein is Thiamine-phosphate synthase.